Here is a 366-residue protein sequence, read N- to C-terminus: Peptide chain release factor 2 (366 aa).

Position 253 is an N5-methylglutamine (Gln253).

Belongs to the prokaryotic/mitochondrial release factor family. In terms of processing, methylated by PrmC. Methylation increases the termination efficiency of RF2.

It localises to the cytoplasm. Its function is as follows. Peptide chain release factor 2 directs the termination of translation in response to the peptide chain termination codons UGA and UAA. This chain is Peptide chain release factor 2, found in Yersinia pseudotuberculosis serotype I (strain IP32953).